Consider the following 340-residue polypeptide: Glycerol-3-phosphate dehydrogenase [NAD(P)+] (340 aa).

NADPH is bound by residues serine 14, phenylalanine 15, arginine 35, and lysine 108. Sn-glycerol 3-phosphate is bound by residues lysine 108 and glycine 136. Alanine 140 lines the NADPH pocket. 5 residues coordinate sn-glycerol 3-phosphate: lysine 191, aspartate 244, serine 254, arginine 255, and asparagine 256. Lysine 191 serves as the catalytic Proton acceptor. Arginine 255 is an NADPH binding site. Glutamate 281 serves as a coordination point for NADPH.

The protein belongs to the NAD-dependent glycerol-3-phosphate dehydrogenase family.

It localises to the cytoplasm. The enzyme catalyses sn-glycerol 3-phosphate + NAD(+) = dihydroxyacetone phosphate + NADH + H(+). The catalysed reaction is sn-glycerol 3-phosphate + NADP(+) = dihydroxyacetone phosphate + NADPH + H(+). The protein operates within membrane lipid metabolism; glycerophospholipid metabolism. Catalyzes the reduction of the glycolytic intermediate dihydroxyacetone phosphate (DHAP) to sn-glycerol 3-phosphate (G3P), the key precursor for phospholipid synthesis. In Pseudomonas paraeruginosa (strain DSM 24068 / PA7) (Pseudomonas aeruginosa (strain PA7)), this protein is Glycerol-3-phosphate dehydrogenase [NAD(P)+].